Consider the following 647-residue polypeptide: Neuronal PAS domain-containing protein 4-like (647 aa).

Residues 16-29 (KRFRSTKGASKARR) are basic motif; degenerate. The bHLH domain maps to 16–67 (KRFRSTKGASKARRDQMNSEIRNLRALLPISPEHRLSYLHSMSITCTYIRKS). The segment at 30-67 (DQMNSEIRNLRALLPISPEHRLSYLHSMSITCTYIRKS) is helix-loop-helix motif. 2 consecutive PAS domains span residues 117-181 (VLQA…SPSG) and 238-274 (SADM…HPDD).

As to quaternary structure, heterodimer; efficient DNA binding requires dimerization with another bHLH protein. As to expression, specifically expressed in endothelial and hematopoietic precursor cells.

It localises to the nucleus. Transcription factor specifically expressed in endothelial and hematopoietic precursor cells that acts as a key regulator of the endothelial differentiation cascade. Acts as an early-response transcription factor that regulates the expression of early regulators of endothelial and haematopoietic differentiation, such as etv2 and tal1. In Danio rerio (Zebrafish), this protein is Neuronal PAS domain-containing protein 4-like.